The primary structure comprises 275 residues: Undecaprenyl-diphosphatase (275 aa).

A run of 8 helical transmembrane segments spans residues 2 to 22, 43 to 63, 83 to 103, 111 to 131, 161 to 181, 186 to 206, 225 to 245, and 255 to 275; these read LDIFKAIILGIIEGVTEFLPI, FINMFMVVIQLGAILSVIVIY, WQIWFKVIAAVLPSIIIGLPL, MTSWQVISATLIIYGILFIVL, VLSMIPGTSRSGATILGAMLI, YVATEFSFFLAIPTMFGASLL, ILLVGMVVSFIVAYLSIKFLL, and PFGWYRIVLGIIVTICGLVFA.

Belongs to the UppP family.

It localises to the cell membrane. It catalyses the reaction di-trans,octa-cis-undecaprenyl diphosphate + H2O = di-trans,octa-cis-undecaprenyl phosphate + phosphate + H(+). Catalyzes the dephosphorylation of undecaprenyl diphosphate (UPP). Confers resistance to bacitracin. The protein is Undecaprenyl-diphosphatase of Lactobacillus delbrueckii subsp. bulgaricus (strain ATCC 11842 / DSM 20081 / BCRC 10696 / JCM 1002 / NBRC 13953 / NCIMB 11778 / NCTC 12712 / WDCM 00102 / Lb 14).